A 497-amino-acid polypeptide reads, in one-letter code: Serine hydroxymethyltransferase (497 aa).

(6S)-5,6,7,8-tetrahydrofolate contacts are provided by residues leucine 176 and 180–182 (GHL). An N6-(pyridoxal phosphate)lysine modification is found at lysine 289.

The protein belongs to the SHMT family. In terms of assembly, homodimer. The cofactor is pyridoxal 5'-phosphate.

The protein resides in the cytoplasm. The catalysed reaction is (6R)-5,10-methylene-5,6,7,8-tetrahydrofolate + glycine + H2O = (6S)-5,6,7,8-tetrahydrofolate + L-serine. Its pathway is one-carbon metabolism; tetrahydrofolate interconversion. It functions in the pathway amino-acid biosynthesis; glycine biosynthesis; glycine from L-serine: step 1/1. Functionally, catalyzes the reversible interconversion of serine and glycine with tetrahydrofolate (THF) serving as the one-carbon carrier. This reaction serves as the major source of one-carbon groups required for the biosynthesis of purines, thymidylate, methionine, and other important biomolecules. Also exhibits THF-independent aldolase activity toward beta-hydroxyamino acids, producing glycine and aldehydes, via a retro-aldol mechanism. This is Serine hydroxymethyltransferase from Chlamydia trachomatis serovar A (strain ATCC VR-571B / DSM 19440 / HAR-13).